The following is a 316-amino-acid chain: Ribosomal RNA small subunit methyltransferase H (316 aa).

S-adenosyl-L-methionine-binding positions include 42–44 (GGH), Asp62, Phe86, Asp104, and Gln111.

Belongs to the methyltransferase superfamily. RsmH family.

Its subcellular location is the cytoplasm. The enzyme catalyses cytidine(1402) in 16S rRNA + S-adenosyl-L-methionine = N(4)-methylcytidine(1402) in 16S rRNA + S-adenosyl-L-homocysteine + H(+). Its function is as follows. Specifically methylates the N4 position of cytidine in position 1402 (C1402) of 16S rRNA. This Polynucleobacter necessarius subsp. necessarius (strain STIR1) protein is Ribosomal RNA small subunit methyltransferase H.